Reading from the N-terminus, the 339-residue chain is D-erythrose-4-phosphate dehydrogenase (339 aa).

NAD(+)-binding positions include 12 to 13 and R81; that span reads RI. Residues 154-156, R200, 213-214, and R236 contribute to the substrate site; these read SCT and TK. Catalysis depends on C155, which acts as the Nucleophile. N318 is a binding site for NAD(+).

It belongs to the glyceraldehyde-3-phosphate dehydrogenase family. Epd subfamily. Homotetramer.

The protein resides in the cytoplasm. It carries out the reaction D-erythrose 4-phosphate + NAD(+) + H2O = 4-phospho-D-erythronate + NADH + 2 H(+). The protein operates within cofactor biosynthesis; pyridoxine 5'-phosphate biosynthesis; pyridoxine 5'-phosphate from D-erythrose 4-phosphate: step 1/5. Its function is as follows. Catalyzes the NAD-dependent conversion of D-erythrose 4-phosphate to 4-phosphoerythronate. This Escherichia fergusonii (strain ATCC 35469 / DSM 13698 / CCUG 18766 / IAM 14443 / JCM 21226 / LMG 7866 / NBRC 102419 / NCTC 12128 / CDC 0568-73) protein is D-erythrose-4-phosphate dehydrogenase.